Here is a 923-residue protein sequence, read N- to C-terminus: Isoleucine--tRNA ligase (923 aa).

Positions 57 to 67 match the 'HIGH' region motif; that stretch reads PYANGHIHIGH. Residue E560 coordinates L-isoleucyl-5'-AMP. The 'KMSKS' region signature appears at 601–605; the sequence is KMSKS. K604 provides a ligand contact to ATP. Zn(2+) is bound by residues C895, C898, C915, and C918.

The protein belongs to the class-I aminoacyl-tRNA synthetase family. IleS type 1 subfamily. As to quaternary structure, monomer. Zn(2+) is required as a cofactor.

The protein resides in the cytoplasm. The enzyme catalyses tRNA(Ile) + L-isoleucine + ATP = L-isoleucyl-tRNA(Ile) + AMP + diphosphate. In terms of biological role, catalyzes the attachment of isoleucine to tRNA(Ile). As IleRS can inadvertently accommodate and process structurally similar amino acids such as valine, to avoid such errors it has two additional distinct tRNA(Ile)-dependent editing activities. One activity is designated as 'pretransfer' editing and involves the hydrolysis of activated Val-AMP. The other activity is designated 'posttransfer' editing and involves deacylation of mischarged Val-tRNA(Ile). This chain is Isoleucine--tRNA ligase, found in Geobacter sulfurreducens (strain ATCC 51573 / DSM 12127 / PCA).